A 474-amino-acid polypeptide reads, in one-letter code: Adenosylhomocysteinase (474 aa).

Residues Thr53, Asp135, and Glu197 each coordinate substrate. Thr198–Thr200 is an NAD(+) binding site. Lys227 and Asp231 together coordinate substrate. NAD(+) is bound by residues Asn232, Gly261–Gly266, Glu284, Asn319, Ile340–His342, and Asn388.

Belongs to the adenosylhomocysteinase family. NAD(+) serves as cofactor.

The protein resides in the cytoplasm. It catalyses the reaction S-adenosyl-L-homocysteine + H2O = L-homocysteine + adenosine. Its pathway is amino-acid biosynthesis; L-homocysteine biosynthesis; L-homocysteine from S-adenosyl-L-homocysteine: step 1/1. May play a key role in the regulation of the intracellular concentration of adenosylhomocysteine. This is Adenosylhomocysteinase from Corynebacterium glutamicum (strain ATCC 13032 / DSM 20300 / JCM 1318 / BCRC 11384 / CCUG 27702 / LMG 3730 / NBRC 12168 / NCIMB 10025 / NRRL B-2784 / 534).